Reading from the N-terminus, the 527-residue chain is UPF0053 protein YegH (527 aa).

7 helical membrane-spanning segments follow: residues I14–L34, L51–L71, F81–A101, G122–D142, I145–I165, I185–F205, and F207–L227. CBS domains follow at residues M306–L366 and L371–V429.

The protein belongs to the UPF0053 family.

It is found in the cell membrane. This chain is UPF0053 protein YegH (yegH), found in Shigella flexneri.